The sequence spans 61 residues: uncharacterized protein (61 aa).

Residues 10-61 are a coiled coil; it reads YEEENDNEDFEEEVELSREDLNQIINELAPFLIKLLTDLTELTQKKEESENE.

This is an uncharacterized protein from Acidianus bottle-shaped virus (isolate Italy/Pozzuoli) (ABV).